A 164-amino-acid polypeptide reads, in one-letter code: UPF0304 protein KPK_1463 (164 aa).

This sequence belongs to the UPF0304 family.

The sequence is that of UPF0304 protein KPK_1463 from Klebsiella pneumoniae (strain 342).